The sequence spans 237 residues: Transcriptional regulatory protein YvrH (237 aa).

The Response regulatory domain occupies 5 to 119 (SILIVDDEKA…ELAARIRAHL (115 aa)). Position 55 is a 4-aspartylphosphate (Asp55). Positions 131 to 230 (NQTYTYDYFT…VRGLGYRFIP (100 aa)) form a DNA-binding region, ompR/PhoB-type.

Phosphorylated by YvrG.

It localises to the cytoplasm. Its function is as follows. Member of the two-component regulatory system YvrG/YvrH that positively regulates 7 transcriptional units (wprA, wapA-yxxG, dltABCDE, sunA, sunT-bdbA-yolJ-bdbB, sigO-rsoA, and sigX-rsiX), and negatively regulates the lytABC operon. The protein is Transcriptional regulatory protein YvrH (yvrH) of Bacillus subtilis (strain 168).